The primary structure comprises 356 residues: Rhomboid-related protein 1 (356 aa).

The next 7 membrane-spanning stretches (helical) occupy residues 107–129 (WCPPPIFMLLITIIQVGIFFFYW), 172–194 (YMFLHAGLNHLLGNVIIQLLVGI), 201–223 (KIWRIGPIYLLAVTSGSLLQYAI), 227–249 (SLLVGASAGVYALIFAHVANVIL), 256–275 (LRWIRVLVLFVFIFLDFGGA), 290–312 (HLAHIAGAVTGLFFGYVVLYNVV), and 319–341 (IIRYVCLFLYSAFFATTIIFVIV). Catalysis depends on S233, which acts as the Nucleophile. Residue H293 is part of the active site.

The protein belongs to the peptidase S54 family.

The protein resides in the membrane. The catalysed reaction is Cleaves type-1 transmembrane domains using a catalytic dyad composed of serine and histidine that are contributed by different transmembrane domains.. Functionally, serine protease which activates lin-3 isoform a in the proximal vulva precursor cells (VPC) during vulva development to transmit the inductive anchor cell signal to the distal VPCs. This Caenorhabditis elegans protein is Rhomboid-related protein 1.